The sequence spans 594 residues: Dual specificity protein phosphatase CDC14A (594 aa).

Residues E7–E162 form an a region. Residues T163–E176 form a linker region. The segment at N177–K343 is b. A Tyrosine-protein phosphatase domain is found at D179–D336. C278 serves as the catalytic Phosphocysteine intermediate. Residues G396–S435 are disordered. Residues S404–S413 show a composition bias toward polar residues. Phosphoserine is present on S484. Residues N487–E560 are disordered. A compositionally biased stretch (polar residues) spans T500–L531. Residues N532–S549 are compositionally biased toward low complexity. At S583 the chain carries Phosphoserine.

It belongs to the protein-tyrosine phosphatase family. Non-receptor class CDC14 subfamily. Interacts with KIF20A, which is required to localize CDC14 to the midzone of the mitotic spindle.

It localises to the nucleus. The protein resides in the cytoplasm. Its subcellular location is the cytoskeleton. The protein localises to the microtubule organizing center. It is found in the centrosome. It localises to the spindle pole. The protein resides in the spindle. Its subcellular location is the cell projection. The protein localises to the kinocilium. It is found in the stereocilium. The enzyme catalyses O-phospho-L-tyrosyl-[protein] + H2O = L-tyrosyl-[protein] + phosphate. It catalyses the reaction O-phospho-L-seryl-[protein] + H2O = L-seryl-[protein] + phosphate. The catalysed reaction is O-phospho-L-threonyl-[protein] + H2O = L-threonyl-[protein] + phosphate. In terms of biological role, dual-specificity phosphatase. Required for centrosome separation and productive cytokinesis during cell division. Dephosphorylates SIRT2 around early anaphase. May dephosphorylate the APC subunit FZR1/CDH1, thereby promoting APC-FZR1 dependent degradation of mitotic cyclins and subsequent exit from mitosis. Required for normal hearing. The chain is Dual specificity protein phosphatase CDC14A (CDC14A) from Homo sapiens (Human).